Consider the following 285-residue polypeptide: Involucrin (285 aa).

3 disordered regions span residues 1 to 93, 120 to 256, and 266 to 285; these read MSQQ…QEQK, LEQQ…AQVQ, and LPLI…PEHQ. Over residues 27–39 the composition is skewed to polar residues; the sequence is IDTQQEQVKQPTS. Composition is skewed to low complexity over residues 72–87, 120–129, and 137–147; these read EQQC…QKQQ, LEQQQEQQES, and EQCLEQQQEQQ. 3 stretches are compositionally biased toward basic and acidic residues: residues 149 to 165, 175 to 185, and 200 to 233; these read SQEK…KEEL, EQCEKHQEAKN, and QQKE…KEEQ. The segment covering 235 to 248 has biased composition (low complexity); sequence LEQQGQQEGQLEQP. Residues 272–285 show a composition bias toward basic and acidic residues; sequence QHQKQEVHDPPEHQ.

The protein belongs to the involucrin family. As to quaternary structure, directly or indirectly cross-linked to cornifelin (CNFN). In terms of processing, substrate of transglutaminase. Specific glutamines or lysines are cross-linked to keratins, desmoplakin and to inter involucrin molecules. Keratinocytes of epidermis and other stratified squamous epithelia.

It localises to the cytoplasm. In terms of biological role, part of the insoluble cornified cell envelope (CE) of stratified squamous epithelia. This is Involucrin (IVL) from Canis lupus familiaris (Dog).